Reading from the N-terminus, the 297-residue chain is Tyrosine recombinase XerD (297 aa).

Residues 1 to 86 enclose the Core-binding (CB) domain; it reads MNDLIEDFLH…SLRSFFHYLM (86 aa). A Tyr recombinase domain is found at 107 to 291; sequence GLPKVLNLDD…TKLRLKDVYK (185 aa). Residues R147, K171, H243, R246, and H269 contribute to the active site. Y278 serves as the catalytic O-(3'-phospho-DNA)-tyrosine intermediate.

This sequence belongs to the 'phage' integrase family. XerD subfamily. In terms of assembly, forms a cyclic heterotetrameric complex composed of two molecules of XerC and two molecules of XerD.

Its subcellular location is the cytoplasm. Its function is as follows. Site-specific tyrosine recombinase, which acts by catalyzing the cutting and rejoining of the recombining DNA molecules. The XerC-XerD complex is essential to convert dimers of the bacterial chromosome into monomers to permit their segregation at cell division. It also contributes to the segregational stability of plasmids. The chain is Tyrosine recombinase XerD from Listeria monocytogenes serovar 1/2a (strain ATCC BAA-679 / EGD-e).